A 923-amino-acid polypeptide reads, in one-letter code: Cell cycle and apoptosis regulator protein 2 (923 aa).

The tract at residues Met1–Thr35 is disordered. Phosphothreonine is present on Thr35. The residue at position 112 (Lys112) is an N6-acetyllysine; by KAT8. Residue Lys123 is modified to N6-methyllysine. Ser124 is subject to Phosphoserine. Disordered stretches follow at residues Leu178–Arg218, Lys446–Ile510, and Val568–Leu643. At Arg180 the chain carries Omega-N-methylarginine. The span at Gly188 to Ser200 shows a compositional bias: basic and acidic residues. At Lys215 the chain carries N6-acetyllysine; by KAT8. Positions Lys446 to Gln458 are enriched in low complexity. Thr454 bears the Phosphothreonine; by ATM, ATR and CK2 mark. Thr484 is modified (phosphothreonine). Phosphoserine is present on Ser569. The span at Glu572 to Ala602 shows a compositional bias: basic and acidic residues. Lys591 participates in a covalent cross-link: Glycyl lysine isopeptide (Lys-Gly) (interchain with G-Cter in SUMO2 and SUMO3); alternate. Residue Lys591 forms a Glycyl lysine isopeptide (Lys-Gly) (interchain with G-Cter in SUMO2); alternate linkage. The interval Glu610–Asp670 is interaction with MCC. Phosphoserine occurs at positions 627, 675, 678, 681, 687, and 808. The interaction with NR1D1 stretch occupies residues Asp704–Asn923. Positions Leu829–Lys909 form a coiled coil. A Phosphothreonine modification is found at Thr897.

Component of the DBIRD complex. Interacts with ZNF326/ZIRD; the interaction is direct. Interacts (via N-terminus) with SIRT1, which inhibits the deacetylation of substrates. Interacts (via N-terminus) with SUV39H1; this interaction abolishes the interaction with SIRT1. Component of a nuclear receptor-mediated transcription complex composed of at least ZNF335, CCAR2 and EMSY; the complex stimulates the transcription of nuclear receptor target genes such as SOX9 and HOXA1. Within the complex interacts with EMSY and interacts with ZNF335 (via C-terminus). Components of this complex may associate with components of a histone methylation complex to form a complex at least composed of ZNF335, HCFC1, CCAR2, EMSY, MKI67, RBBP5, ASH2L and WDR5. Within this complex, interacts with ASH2L. Interacts with NR1D1. Interacts (via N-terminus) with ESR1 and ESR2. Interacts (via N-terminus) with HDAC3 (via C-terminus). Interacts with HDAC1 and MED2F. Interacts with MCC. Interacts (via N-terminus) with NR1H2 and NR1H3 in a ligand-independent manner. Interacts with CSNK2A1. Interacts (via N-terminus) with p53/TP53. Interacts (via N-terminus) with BRCA1 (via the BRCT domains). Interacts (via N-terminus) with CHEK2 (via protein kinase domain). Interacts with PSEM3. Interacts (via N-terminus) with PSIA3 and SENP1. The sumoylated form shows a preferential interaction with SIRT1 as compared to its unmodified form. Interacts with CECR2; may form part of the CERF-1 and/or CEF-5 ISWI chromatin remodeling complexes in embryonic stem cells. ATM/ATR-mediated phosphorylation at Thr-454 upon DNA damage promotes binding to SIRT1. Phosphorylation at Thr-454 promotes its sumoylation by switching the binding partner of CCAR2 from SENP1 to PIAS3. Post-translationally, acetylation at Lys-112 and Lys-215 by KAT8 prevents inhibitory binding to SIRT1 and increases its deacetylase activity. In terms of processing, genotoxic stress induces its sumoylation and sumoylation promotes the SIRT1-CCAR2 interaction which in turn inhibits SIRT1-mediated deacetylation of p53/TP53. Sumoylation leads to transcriptional activation of p53/TP53 by sequestering SIRT1 from p53/TP53. Desumoylated by SENP1. Expressed in gastric carcinoma tissue and the expression gradually increases with the progression of the carcinoma (at protein level). Expressed ubiquitously in normal tissues. Expressed in 84 to 100% of neoplastic breast, lung, and colon tissues.

It is found in the nucleus. The protein resides in the cytoplasm. Its subcellular location is the cytoskeleton. It localises to the spindle. Functionally, core component of the DBIRD complex, a multiprotein complex that acts at the interface between core mRNP particles and RNA polymerase II (RNAPII) and integrates transcript elongation with the regulation of alternative splicing: the DBIRD complex affects local transcript elongation rates and alternative splicing of a large set of exons embedded in (A + T)-rich DNA regions. Inhibits SIRT1 deacetylase activity leading to increasing levels of p53/TP53 acetylation and p53-mediated apoptosis. Inhibits SUV39H1 methyltransferase activity. Mediates ligand-dependent transcriptional activation by nuclear hormone receptors. Plays a critical role in maintaining genomic stability and cellular integrity following UV-induced genotoxic stress. Regulates the circadian expression of the core clock components NR1D1 and BMAL1. Enhances the transcriptional repressor activity of NR1D1 through stabilization of NR1D1 protein levels by preventing its ubiquitination and subsequent degradation. Represses the ligand-dependent transcriptional activation function of ESR2. Acts as a regulator of PCK1 expression and gluconeogenesis by a mechanism that involves, at least in part, both NR1D1 and SIRT1. Negatively regulates the deacetylase activity of HDAC3 and can alter its subcellular localization. Positively regulates the beta-catenin pathway (canonical Wnt signaling pathway) and is required for MCC-mediated repression of the beta-catenin pathway. Represses ligand-dependent transcriptional activation function of NR1H2 and NR1H3 and inhibits the interaction of SIRT1 with NR1H3. Plays an important role in tumor suppression through p53/TP53 regulation; stabilizes p53/TP53 by affecting its interaction with ubiquitin ligase MDM2. Represses the transcriptional activator activity of BRCA1. Inhibits SIRT1 in a CHEK2 and PSEM3-dependent manner and inhibits the activity of CHEK2 in vitro. This chain is Cell cycle and apoptosis regulator protein 2 (CCAR2), found in Homo sapiens (Human).